The chain runs to 519 residues: GTPase Der (519 aa).

2 stretches are compositionally biased toward acidic residues: residues M1–E12 and G30–G54. Residues M1–G54 form a disordered region. EngA-type G domains follow at residues C81–P244 and R254–D427. Residues G87–S94, D134–W138, N196–D199, G260–S267, D307–L311, and N372–D375 each bind GTP. Residues R428–E510 form the KH-like domain.

This sequence belongs to the TRAFAC class TrmE-Era-EngA-EngB-Septin-like GTPase superfamily. EngA (Der) GTPase family. Associates with the 50S ribosomal subunit.

GTPase that plays an essential role in the late steps of ribosome biogenesis. The polypeptide is GTPase Der (Corynebacterium glutamicum (strain ATCC 13032 / DSM 20300 / JCM 1318 / BCRC 11384 / CCUG 27702 / LMG 3730 / NBRC 12168 / NCIMB 10025 / NRRL B-2784 / 534)).